The chain runs to 1893 residues: Nestin (1893 aa).

Met-1 carries the post-translational modification N-acetylmethionine. Residues 1–7 (MEGCVGE) are head. The interval 8–43 (ESFQMWELNRRLEAYLTRVKTLEEQNQLLSAELGGL) is coil 1A. One can recognise an IF rod domain in the interval 8–314 (ESFQMWELNR…TLLEAENSRL (307 aa)). The linker 1 stretch occupies residues 44–55 (RAQSGDTSWRAR). A coil 1B region spans residues 56–151 (ADDELASLRI…AAHEEERAHL (96 aa)). Positions 150–172 (HLNAQAACAPRRPPAPPHGSPVR) are disordered. The segment at 152–174 (NAQAACAPRRPPAPPHGSPVRAP) is linker 12. The coil 2A stretch occupies residues 175–193 (EVEDLARRLGEVWRGAVRD). A linker 2 region spans residues 194-196 (YQE). Residues 197 to 314 (RVAHMESSLG…TLLEAENSRL (118 aa)) are coil 2B. At Ser-312 the chain carries Phosphoserine. Positions 315–1893 (QTPGRGSQAS…DGDSWSSGED (1579 aa)) are tail. A Phosphothreonine modification is found at Thr-316. Ser-356 and Ser-359 each carry phosphoserine. Thr-389 is subject to Phosphothreonine. Disordered regions lie at residues 437–479 (PELE…SGSR), 507–529 (NSSA…SQGP), and 556–879 (KENC…NQKS). A compositionally biased stretch (polar residues) spans 507–517 (NSSAQKTQESG). Ser-562 is subject to Phosphoserine. 2 stretches are compositionally biased toward basic and acidic residues: residues 572 to 595 (GPEK…EKTL) and 606 to 615 (LGKEDTRTED). Ser-620 is modified (phosphoserine). Composition is skewed to basic and acidic residues over residues 634–646 (ESQE…KEGN) and 670–681 (MLERLVEKEDQS). A phosphoserine mark is found at Ser-685 and Ser-729. Composition is skewed to basic and acidic residues over residues 717–730 (RLIE…LRSP), 761–774 (RLIE…LRSA), 802–818 (ILER…LRSP), and 846–879 (MLER…NQKS). Residue Ser-817 is modified to Phosphoserine. Phosphoserine is present on Ser-903. Basic and acidic residues-rich tracts occupy residues 949-966 (LLED…DRNG) and 989-1051 (QRIV…KSLE). The segment at 949 to 1130 (LLEDKTHKSL…ARSLGKENQE (182 aa)) is disordered. 2 positions are modified to phosphoserine: Ser-1005 and Ser-1049. A Glycyl lysine isopeptide (Lys-Gly) (interchain with G-Cter in SUMO1); alternate cross-link involves residue Lys-1136. Lys-1136 participates in a covalent cross-link: Glycyl lysine isopeptide (Lys-Gly) (interchain with G-Cter in SUMO2); alternate. Phosphoserine occurs at positions 1145 and 1166. The disordered stretch occupies residues 1155–1222 (ETAEEDLERR…ELSSLGKWNV (68 aa)). Positions 1198-1212 (DENRETLTSLEKESQ) are enriched in basic and acidic residues. Phosphoserine occurs at positions 1216 and 1229. Positions 1237–1263 (EGLQEEQHQESLREVKQELPSSGNQQR) are disordered. The segment covering 1241–1253 (EEQHQESLREVKQ) has biased composition (basic and acidic residues). At Ser-1322 the chain carries Phosphoserine. 2 disordered regions span residues 1336–1369 (DNLE…EQDS) and 1388–1824 (EVVG…SEQV). 2 stretches are compositionally biased toward basic and acidic residues: residues 1354–1363 (VTERDEDRAQ) and 1393–1403 (EDPRHFAREEA). 2 stretches are compositionally biased toward acidic residues: residues 1458 to 1469 (ESMEGWEEEEAS) and 1561 to 1576 (QDWE…DDLG). Phosphoserine is present on residues Ser-1570, Ser-1594, Ser-1686, Ser-1695, Ser-1772, and Ser-1774. Over residues 1688 to 1709 (GFADEEESGEEGEEEDADEEGA) the composition is skewed to acidic residues. A compositionally biased stretch (acidic residues) spans 1773-1788 (GSEESESASLEGEEGQ). Polar residues predominate over residues 1815–1824 (QSPNLDSEQV). Phosphoserine is present on residues Ser-1866, Ser-1889, and Ser-1890. Residues 1870–1893 (LGPSQPLKFTLSGVDGDSWSSGED) form a disordered region.

This sequence belongs to the intermediate filament family. As to quaternary structure, forms homodimers and homotetramers in vitro. In mixtures with other intermediate filament proteins such as vimentin and alpha-internexin, this protein preferentially forms heterodimers which can assemble to form intermediate filaments if nestin does not exceed 25%. Interacts with FHOD3. Post-translationally, constitutively phosphorylated. This increases during mitosis when the cytoplasmic intermediate filament network is reorganized. CNS stem cells.

Required for brain and eye development. Promotes the disassembly of phosphorylated vimentin intermediate filaments (IF) during mitosis and may play a role in the trafficking and distribution of IF proteins and other cellular factors to daughter cells during progenitor cell division. Required for survival, renewal and mitogen-stimulated proliferation of neural progenitor cells. This chain is Nestin (Nes), found in Rattus norvegicus (Rat).